The sequence spans 390 residues: tRNA(Met) cytidine acetate ligase (390 aa).

Residues 7–20 (VVEY…HKLH), Gly101, Asn162, and Arg187 each bind ATP.

It belongs to the TmcAL family.

The protein localises to the cytoplasm. It catalyses the reaction cytidine(34) in elongator tRNA(Met) + acetate + ATP = N(4)-acetylcytidine(34) in elongator tRNA(Met) + AMP + diphosphate. Catalyzes the formation of N(4)-acetylcytidine (ac(4)C) at the wobble position of elongator tRNA(Met), using acetate and ATP as substrates. First activates an acetate ion to form acetyladenylate (Ac-AMP) and then transfers the acetyl group to tRNA to form ac(4)C34. The protein is tRNA(Met) cytidine acetate ligase of Listeria monocytogenes serotype 4b (strain CLIP80459).